The primary structure comprises 218 residues: Thiamine-phosphate synthase (218 aa).

4-amino-2-methyl-5-(diphosphooxymethyl)pyrimidine-binding positions include 43–47 and Asn-78; that span reads QFRDK. Residues Asp-79 and Asp-98 each contribute to the Mg(2+) site. Ser-117 provides a ligand contact to 4-amino-2-methyl-5-(diphosphooxymethyl)pyrimidine. 143-145 lines the 2-[(2R,5Z)-2-carboxy-4-methylthiazol-5(2H)-ylidene]ethyl phosphate pocket; the sequence is TNS. Lys-146 contacts 4-amino-2-methyl-5-(diphosphooxymethyl)pyrimidine. 2-[(2R,5Z)-2-carboxy-4-methylthiazol-5(2H)-ylidene]ethyl phosphate-binding positions include Gly-174 and 194–195; that span reads IS.

It belongs to the thiamine-phosphate synthase family. Mg(2+) serves as cofactor.

It carries out the reaction 2-[(2R,5Z)-2-carboxy-4-methylthiazol-5(2H)-ylidene]ethyl phosphate + 4-amino-2-methyl-5-(diphosphooxymethyl)pyrimidine + 2 H(+) = thiamine phosphate + CO2 + diphosphate. The enzyme catalyses 2-(2-carboxy-4-methylthiazol-5-yl)ethyl phosphate + 4-amino-2-methyl-5-(diphosphooxymethyl)pyrimidine + 2 H(+) = thiamine phosphate + CO2 + diphosphate. It catalyses the reaction 4-methyl-5-(2-phosphooxyethyl)-thiazole + 4-amino-2-methyl-5-(diphosphooxymethyl)pyrimidine + H(+) = thiamine phosphate + diphosphate. The protein operates within cofactor biosynthesis; thiamine diphosphate biosynthesis; thiamine phosphate from 4-amino-2-methyl-5-diphosphomethylpyrimidine and 4-methyl-5-(2-phosphoethyl)-thiazole: step 1/1. Functionally, condenses 4-methyl-5-(beta-hydroxyethyl)thiazole monophosphate (THZ-P) and 2-methyl-4-amino-5-hydroxymethyl pyrimidine pyrophosphate (HMP-PP) to form thiamine monophosphate (TMP). The polypeptide is Thiamine-phosphate synthase (Lactococcus lactis subsp. cremoris (strain SK11)).